The sequence spans 374 residues: UPF0496 protein At4g34320 (374 aa).

A run of 2 helical transmembrane segments spans residues 215–235 (IIFVATFATVLICSVVAAAMA) and 238–258 (PVAAALAAATAVPLGSMGKWI).

Belongs to the UPF0496 family.

It localises to the membrane. This Arabidopsis thaliana (Mouse-ear cress) protein is UPF0496 protein At4g34320.